A 1481-amino-acid chain; its full sequence is Nucleoporin NUP159 (1481 aa).

WD repeat units lie at residues 106 to 146 and 201 to 241; these read PLPL…QGNT and TLRS…AHIP. PXFG repeat units lie at residues 483 to 486, 493 to 496, 519 to 522, 524 to 527, 532 to 535, and 559 to 562; these read PTFG, PAFG, and PSFG. Residues 607-616 are compositionally biased toward low complexity; sequence GSSIFSSKPG. Disordered regions lie at residues 607-647 and 662-991; these read GSSI…PAFG and TAAH…SLGG. The stretch at 644–647 is one PXFG 7 repeat; it reads PAFG. A compositionally biased stretch (basic and acidic residues) spans 663 to 677; sequence AAHDIEKPKEGESKS. 2 stretches are compositionally biased toward polar residues: residues 724–734 and 741–763; these read FESTTPTTTPA and KTTT…SSMP. Basic and acidic residues predominate over residues 773 to 794; that stretch reads SAEKPKSIFDTLKPKEESKENL. A compositionally biased stretch (low complexity) spans 814–833; that stretch reads PGSSSSESAESSPGAAAKAA. 2 stretches are compositionally biased toward basic and acidic residues: residues 837 to 850 and 862 to 877; these read GNDE…ELAP and VKAK…KAEE. A compositionally biased stretch (acidic residues) spans 903-955; it reads ASEEEQGQAEEEEAESGEEEEEEEEEGEGEEEEEEEEEEEEEEEEGEEGEEQS. Coiled coils occupy residues 903-957 and 1233-1318; these read ASEE…QSEA and MAAI…AARG. Residues 1345-1352 carry the Bipartite nuclear localization signal motif; the sequence is EKRSGDID. Disordered stretches follow at residues 1385–1404 and 1414–1443; these read ATPG…TPQS and GSVG…MYTA. The Bipartite nuclear localization signal motif lies at 1435–1442; that stretch reads KKKLSMYT.

In terms of assembly, component of the nuclear pore complex (NPC). NPC constitutes the exclusive means of nucleocytoplasmic transport. NPCs allow the passive diffusion of ions and small molecules and the active, nuclear transport receptor-mediated bidirectional transport of macromolecules such as proteins, RNAs, ribonucleoparticles (RNPs), and ribosomal subunits across the nuclear envelope. Due to its 8-fold rotational symmetry, all subunits are present with 8 copies or multiples thereof.

The protein resides in the nucleus. The protein localises to the nuclear pore complex. It is found in the nucleus membrane. Its function is as follows. Functions as a component of the nuclear pore complex (NPC). NPC components, collectively referred to as nucleoporins (NUPs), can play the role of both NPC structural components and of docking or interaction partners for transiently associated nuclear transport factors. Active directional transport is assured by both, a Phe-Gly (FG) repeat affinity gradient for these transport factors across the NPC and a transport cofactor concentration gradient across the nuclear envelope (GSP1 and GSP2 GTPases associated predominantly with GTP in the nucleus, with GDP in the cytoplasm). NUP159 plays an important role in several nuclear export pathways including poly(A)+ RNA, pre-ribosome, and protein export. The sequence is that of Nucleoporin NUP159 (NUP159) from Chaetomium thermophilum (strain DSM 1495 / CBS 144.50 / IMI 039719) (Thermochaetoides thermophila).